We begin with the raw amino-acid sequence, 443 residues long: NADH-quinone oxidoreductase subunit D 1 (443 aa).

The protein belongs to the complex I 49 kDa subunit family. NDH-1 is composed of 14 different subunits. Subunits NuoB, C, D, E, F, and G constitute the peripheral sector of the complex.

The protein resides in the cell membrane. The catalysed reaction is a quinone + NADH + 5 H(+)(in) = a quinol + NAD(+) + 4 H(+)(out). Functionally, NDH-1 shuttles electrons from NADH, via FMN and iron-sulfur (Fe-S) centers, to quinones in the respiratory chain. The immediate electron acceptor for the enzyme in this species is believed to be a menaquinone. Couples the redox reaction to proton translocation (for every two electrons transferred, four hydrogen ions are translocated across the cytoplasmic membrane), and thus conserves the redox energy in a proton gradient. The sequence is that of NADH-quinone oxidoreductase subunit D 1 from Streptomyces avermitilis (strain ATCC 31267 / DSM 46492 / JCM 5070 / NBRC 14893 / NCIMB 12804 / NRRL 8165 / MA-4680).